We begin with the raw amino-acid sequence, 478 residues long: Zinc metalloproteinase/disintegrin VMP-II (478 aa).

An N-terminal signal peptide occupies residues 1–20 (MIQVLLVTICLAVFPYQGSS). Positions 21–190 (IILESGNVND…KASQLNLTPE (170 aa)) are excised as a propeptide. The Peptidase M12B domain maps to 197–393 (RYIELVIVAD…HNPQCMLNEP (197 aa)). Glutamate 200 and aspartate 284 together coordinate Ca(2+). 3 cysteine pairs are disulfide-bonded: cysteine 308–cysteine 388, cysteine 348–cysteine 372, and cysteine 350–cysteine 355. Position 333 (histidine 333) interacts with Zn(2+). Glutamate 334 is a catalytic residue. Residues histidine 337 and histidine 343 each coordinate Zn(2+). Ca(2+) is bound by residues cysteine 388 and asparagine 391. Residues 394–405 (LGTDTVSRNELL) constitute a propeptide that is removed on maturation. A Disintegrin domain is found at 414 to 478 (GSPANPCCDA…ADCPRNRFHA (65 aa)). 4 cysteine pairs are disulfide-bonded: cysteine 420-cysteine 443, cysteine 434-cysteine 440, cysteine 439-cysteine 464, and cysteine 452-cysteine 471. The short motif at 456 to 458 (RGD) is the Cell attachment site element.

The protein belongs to the venom metalloproteinase (M12B) family. P-II subfamily. P-IIe sub-subfamily. As to quaternary structure, heterodimer; disulfide-linked (disintegrin). Zn(2+) is required as a cofactor. As to expression, expressed by the venom gland.

It localises to the secreted. Its function is as follows. Impairs hemostasis in the envenomed animal. In terms of biological role, this recombinant protein inhibits ADP-induced platelet aggregation in whole human blood and this effect is concentration-dependent with an IC(50) of 34 nM. In Crotalus viridis viridis (Prairie rattlesnake), this protein is Zinc metalloproteinase/disintegrin VMP-II.